Here is a 166-residue protein sequence, read N- to C-terminus: MSEAAIAKKETLVQAAAEKFESAASVVIVDYRGLTVEEVTNLRKQLRDAGVEMKVIKNSILSRAAKKVGLDGLDEVFTGPTAVAFSNDDVVAPAKIIDEFAKDAKALEIKGGVIEGKVSSVEQITALAKLPNREGLLSMLLSVLQAPVRNVAYAVKAVAEKNEEVA.

This sequence belongs to the universal ribosomal protein uL10 family. In terms of assembly, part of the ribosomal stalk of the 50S ribosomal subunit. The N-terminus interacts with L11 and the large rRNA to form the base of the stalk. The C-terminus forms an elongated spine to which L12 dimers bind in a sequential fashion forming a multimeric L10(L12)X complex.

In terms of biological role, forms part of the ribosomal stalk, playing a central role in the interaction of the ribosome with GTP-bound translation factors. This is Large ribosomal subunit protein uL10 from Enterococcus faecalis (strain ATCC 700802 / V583).